A 638-amino-acid chain; its full sequence is Homeobox protein 10 (638 aa).

3 disordered regions span residues 23–55 (ETQPTTPTTQPTTPTTNTISTTTNTITSTLNTN), 76–139 (TDEN…VNTN), and 195–219 (IANEDKESLPEPQTNSNVNGNEEAK). Low complexity-rich tracts occupy residues 24 to 55 (TQPTTPTTQPTTPTTNTISTTTNTITSTLNTN) and 80 to 139 (NTSV…VNTN). The segment covering 205 to 214 (EPQTNSNVNG) has biased composition (polar residues). A DNA-binding region (homeobox) is located at residues 301–360 (NKKKRQRTSPEQLAILEQIFETDKMPSQQIRVRLANQLGMSSRRVQIWFQNKRAKVKRGG). Disordered regions lie at residues 381-431 (EDED…TSSD) and 448-638 (SSSS…IVKN). Low complexity-rich tracts occupy residues 388 to 411 (SLTIDESGNNNNNSGNNNNNNNNG), 419 to 430 (LSSSPTNLNTSS), and 462 to 501 (NNTNNNNNNNNNNNNNNNNNNNNNNNHTTTTTTTTTTTTT). 2 stretches are compositionally biased toward polar residues: residues 502 to 522 (SSSPPLTSFNFQLNQSLNKLT) and 545 to 573 (SLNSTASSLPSFPQIKLNSSSKHIPTDKQ). Residues 575-625 (NSDFSNFNNNNNNNNNNNNNNNNNNNINNNGNNNSNNNDSNNNNNKSNFSD) are compositionally biased toward low complexity.

It is found in the nucleus. Putative transcription factor. This chain is Homeobox protein 10 (hbx10), found in Dictyostelium discoideum (Social amoeba).